The following is a 321-amino-acid chain: MGTTKHSKLLILGSGPAGYTAAVYAARANLQPVLITGMEKGGQLTTTTEVENWPGDPNDLTGPLLMERMHEHATKFETEIIFDHINKVDLQNRPFRLNGDNGEYTCDALIIATGASARYLGLPSEEAFKGRGVSACATCDGFFYRNQKVAVIGGGNTAVEEALYLSNIASEVHLIHRRDGFRAEKILIKRLMDKVENGNIILHTNRTLEEVTGDQMGVTGVRLRDTQNSDNIESLDVAGLFVAIGHSPNTAIFEGQLELENGYIKVQSGIHGNATQTSIPGVFAAGDVMDHIYRQAITSAGTGCMAALDAERYLDGLADAK.

An FAD-binding site is contributed by 36–43 (TGMEKGGQ). Cysteines 136 and 139 form a disulfide. 287 to 296 (DVMDHIYRQA) contributes to the FAD binding site.

The protein belongs to the class-II pyridine nucleotide-disulfide oxidoreductase family. In terms of assembly, homodimer. FAD is required as a cofactor.

Its subcellular location is the cytoplasm. It catalyses the reaction [thioredoxin]-dithiol + NADP(+) = [thioredoxin]-disulfide + NADPH + H(+). The polypeptide is Thioredoxin reductase (trxB) (Escherichia coli O157:H7).